A 406-amino-acid chain; its full sequence is S-adenosylmethionine synthase (406 aa).

H16 lines the ATP pocket. Mg(2+) is bound at residue D18. Position 44 (E44) interacts with K(+). L-methionine-binding residues include E57 and Q109. Residues 109-119 (QSPQIAQGVDE) are flexible loop. Residues 174-176 (DAK), 249-250 (RF), D258, 264-265 (RK), A281, and K285 each bind ATP. An L-methionine-binding site is contributed by D258. Residue K289 participates in L-methionine binding.

Belongs to the AdoMet synthase family. Homotetramer; dimer of dimers. Mg(2+) serves as cofactor. Requires K(+) as cofactor.

It localises to the cytoplasm. It carries out the reaction L-methionine + ATP + H2O = S-adenosyl-L-methionine + phosphate + diphosphate. Its pathway is amino-acid biosynthesis; S-adenosyl-L-methionine biosynthesis; S-adenosyl-L-methionine from L-methionine: step 1/1. Functionally, catalyzes the formation of S-adenosylmethionine (AdoMet) from methionine and ATP. The overall synthetic reaction is composed of two sequential steps, AdoMet formation and the subsequent tripolyphosphate hydrolysis which occurs prior to release of AdoMet from the enzyme. The chain is S-adenosylmethionine synthase from Sphingopyxis alaskensis (strain DSM 13593 / LMG 18877 / RB2256) (Sphingomonas alaskensis).